Consider the following 1227-residue polypeptide: Beta-alanyl-bioamine nonribosomal peptide synthetase (1227 aa).

Residues 1–850 form an adenylation region; the sequence is MPQSTAQLKS…FGKNSRDFKL (850 aa). One can recognise a Carrier domain in the interval 851 to 931; it reads SRGRERARKV…SILTSLQNTE (81 aa). At serine 892 the chain carries O-(pantetheine 4'-phosphoryl)serine. A condensation region spans residues 932-1227; sequence SDFLKTQEPF…YMIKELNPSS (296 aa).

The protein belongs to the NRP synthetase family. Pantetheine 4'-phosphate is required as a cofactor. As to expression, in virgin and paired males, bilaterally expressed in some cells in the head. During pairing, expressed throughout the ventral side of the body probably in ciliated neurons. Highly expressed in virgin females in cells throughout the body and only weakly expressed in sexually mature females. In virgin females, expressed in some cells in the head and on the dorsal surface and lateral edges of body.

It carries out the reaction tryptamine + beta-alanine + ATP = beta-alanyl-tryptamine + AMP + diphosphate + H(+). It catalyses the reaction beta-alanine + ATP + H(+) = beta-alanyl-5'-AMP + diphosphate. The catalysed reaction is beta-alanyl-5'-AMP + holo-[peptidyl-carrier protein] = beta-alanyl-[peptidyl-carrier protein] + AMP + H(+). The enzyme catalyses beta-alanyl-[peptidyl-carrier protein] + tryptamine = beta-alanyl-tryptamine + holo-[peptidyl-carrier protein] + H(+). Functionally, catalyzes the condensation of beta-alanine with tryptamine to form beta-alanyl-tryptamine (BATT). Beta-alanyl-tryptamine is an essential pheromone produced by the male that stimulates female sexual development during pairing. The polypeptide is Beta-alanyl-bioamine nonribosomal peptide synthetase (Schistosoma mansoni (Blood fluke)).